We begin with the raw amino-acid sequence, 252 residues long: Trans-aconitate 2-methyltransferase (252 aa).

It belongs to the methyltransferase superfamily. Tam family.

It localises to the cytoplasm. The catalysed reaction is trans-aconitate + S-adenosyl-L-methionine = (E)-3-(methoxycarbonyl)pent-2-enedioate + S-adenosyl-L-homocysteine. In terms of biological role, catalyzes the S-adenosylmethionine monomethyl esterification of trans-aconitate. In Enterobacter sp. (strain 638), this protein is Trans-aconitate 2-methyltransferase.